The primary structure comprises 393 residues: Pyridinium-3,5-bisthiocarboxylic acid mononucleotide nickel insertion protein (393 aa).

It belongs to the LarC family.

It catalyses the reaction Ni(II)-pyridinium-3,5-bisthiocarboxylate mononucleotide = pyridinium-3,5-bisthiocarboxylate mononucleotide + Ni(2+). Functionally, involved in the biosynthesis of a nickel-pincer cofactor ((SCS)Ni(II) pincer complex). Binds Ni(2+), and functions in nickel delivery to pyridinium-3,5-bisthiocarboxylic acid mononucleotide (P2TMN), to form the mature cofactor. Is thus probably required for the activation of nickel-pincer cofactor-dependent enzymes. The polypeptide is Pyridinium-3,5-bisthiocarboxylic acid mononucleotide nickel insertion protein (Nocardioides sp. (strain ATCC BAA-499 / JS614)).